A 488-amino-acid chain; its full sequence is MKKLTALFNLPELKNDIELHNMVLDSRKVKAGDLFVAIKGHQVDGNQFIDSALHSGASAVVSETELSSEHLTVAFIGNVPVVKYYQLAHHLSSLADVFYDSPSNNLTLVGVTGTNGKTTISQLLAQWAELLGHRAAVMGTIGNGLFGQIVEAKNTTGSAVEIQSSLSAFKHAGADFTSIEVSSHGLAQHRVEALHFKAAIFTNLTRDHLDYHQSMENYAAAKKRLFTELDTQIKVINADDEIGYQWLTELPDAIAVSMNADFKVGSHQWMKAINIHYHFKGADITFESSWGNGVLHSPLIGAFNVSNLLLVMTTLLSFGYPLENLLATAKSLKGVCGRMEMIQYPNKPTVIVDYAHTPDALEKALIAAREHCQGELWCIFGCGGDRDRGKRPLMAQVAEQFAEKIIVTKDNPRTESQSQIETDIVAGFKNMEKVGIIPDRAQAIQFAIESAVENDVILIAGKGHEHYQIIGSEVVHFSDQEIALDFLK.

Residues leucine 24, serine 26, and 41 to 43 each bind UDP-N-acetyl-alpha-D-muramoyl-L-alanyl-D-glutamate; that span reads HQV. 113-119 serves as a coordination point for ATP; sequence GTNGKTT. Residues asparagine 154, 155 to 156, serine 182, glutamine 188, and arginine 190 contribute to the UDP-N-acetyl-alpha-D-muramoyl-L-alanyl-D-glutamate site; that span reads TT. Lysine 222 is modified (N6-carboxylysine). Meso-2,6-diaminopimelate is bound by residues arginine 386, 410 to 413, glycine 461, and glutamate 465; that span reads DNPR. The Meso-diaminopimelate recognition motif motif lies at 410–413; that stretch reads DNPR.

This sequence belongs to the MurCDEF family. MurE subfamily. Mg(2+) is required as a cofactor. Carboxylation is probably crucial for Mg(2+) binding and, consequently, for the gamma-phosphate positioning of ATP.

The protein localises to the cytoplasm. The catalysed reaction is UDP-N-acetyl-alpha-D-muramoyl-L-alanyl-D-glutamate + meso-2,6-diaminopimelate + ATP = UDP-N-acetyl-alpha-D-muramoyl-L-alanyl-gamma-D-glutamyl-meso-2,6-diaminopimelate + ADP + phosphate + H(+). The protein operates within cell wall biogenesis; peptidoglycan biosynthesis. Functionally, catalyzes the addition of meso-diaminopimelic acid to the nucleotide precursor UDP-N-acetylmuramoyl-L-alanyl-D-glutamate (UMAG) in the biosynthesis of bacterial cell-wall peptidoglycan. This Haemophilus influenzae (strain ATCC 51907 / DSM 11121 / KW20 / Rd) protein is UDP-N-acetylmuramoyl-L-alanyl-D-glutamate--2,6-diaminopimelate ligase.